The primary structure comprises 424 residues: MLEVVISDIQAREILDSRGYPTLYVKVTTDAGTFGEACVPSGASTGIKEALELRDQDSSRFQGKGVLQAVKNVKEVLLPVLQGISIFDQILIDSIMVEADGTPNKEKLGANAILGVSLASAKAAAATLGRSFYRYLGGCFAHVLPCPMMNLINGGMHANNGLQFQEFMIRPIGATSLKEAVRMGADVFHSLKNILNEKNLATGVGDEGGFAPQLKSNSEALDLLVLAIEKAGFQPGEDISLALDCAASSFYDTKAETYDGKSYEEQVNILADLCDRYPIDSIEDGLAEEDFDGWELLTAELGESIQIVGDDLFVTNPELIADGISRGLANAVLIKPNQIGTLTETSEAIQLAHSQGYTTILSHRSGETEDTTIADLAVAFNTGQIKTGSLSRSERIAKYNRLMAIEEELGPEGLFKDSNPFSGE.

Position 165 (Gln165) interacts with (2R)-2-phosphoglycerate. The active-site Proton donor is the Glu207. The Mg(2+) site is built by Asp244, Glu283, and Asp310. (2R)-2-phosphoglycerate contacts are provided by Lys335, Arg364, Ser365, and Lys386. Lys335 serves as the catalytic Proton acceptor.

It belongs to the enolase family. The cofactor is Mg(2+).

Its subcellular location is the cytoplasm. The protein localises to the secreted. It localises to the cell surface. It catalyses the reaction (2R)-2-phosphoglycerate = phosphoenolpyruvate + H2O. It functions in the pathway carbohydrate degradation; glycolysis; pyruvate from D-glyceraldehyde 3-phosphate: step 4/5. Its function is as follows. Catalyzes the reversible conversion of 2-phosphoglycerate (2-PG) into phosphoenolpyruvate (PEP). It is essential for the degradation of carbohydrates via glycolysis. The protein is Enolase of Chlamydia caviae (strain ATCC VR-813 / DSM 19441 / 03DC25 / GPIC) (Chlamydophila caviae).